Reading from the N-terminus, the 318-residue chain is Glutathione synthetase (318 aa).

The region spanning 129 to 314 is the ATP-grasp domain; sequence KLAITEFPDL…VPEMFAVALE (186 aa). 155–211 contributes to the ATP binding site; that stretch reads HAAQGDVIVKPLDGMGGTGIFRLQRSEPNLNAILETLTDNGTRTIMAQRYIPEIVKG. Mg(2+) contacts are provided by glutamate 285 and asparagine 287.

It belongs to the prokaryotic GSH synthase family. Mg(2+) serves as cofactor. It depends on Mn(2+) as a cofactor.

It catalyses the reaction gamma-L-glutamyl-L-cysteine + glycine + ATP = glutathione + ADP + phosphate + H(+). Its pathway is sulfur metabolism; glutathione biosynthesis; glutathione from L-cysteine and L-glutamate: step 2/2. This Bordetella bronchiseptica (strain ATCC BAA-588 / NCTC 13252 / RB50) (Alcaligenes bronchisepticus) protein is Glutathione synthetase.